The chain runs to 343 residues: Outer envelope pore protein 37, chloroplastic (343 aa).

Composition is skewed to polar residues over residues 1–11 (MADPSSQNPNL) and 23–43 (THQIQSGTSELSPPSRPPCST). The segment at 1–43 (MADPSSQNPNLATPPPPSSPSPTHQIQSGTSELSPPSRPPCST) is disordered. A chloroplast-targeting transit peptide spans 1-73 (MADPSSQNPN…DSLLFLNKVS (73 aa)). Topologically, residues 74–76 (CKL) are cytoplasmic. The chain crosses the membrane as a beta stranded span at residues 77 to 86 (FDNLAKLKLS). The Chloroplast intermembrane segment spans residues 87–103 (FQNNSQREISQPQVSFT). The chain crosses the membrane as a beta stranded span at residues 104 to 113 (SKHVSVLYDV). The Cytoplasmic portion of the chain corresponds to 114-129 (EEKNTFIKSTLDVHPR). A beta stranded membrane pass occupies residues 130–137 (LQLRALHN). The Chloroplast intermembrane segment spans residues 138–154 (VKAQQGEVAMEANLTEP). Residues 155–164 (GYSLELSSPV) form a beta stranded membrane-spanning segment. Residues 165-169 (PIGYP) lie on the Cytoplasmic side of the membrane. Residues 170-178 (RATLKFPLG) form a beta stranded membrane-spanning segment. Topologically, residues 179–219 (EISLQEKDEEEEEKQKRTLSVNGILKRQVMNGVCTALYTDE) are chloroplast intermembrane. The chain crosses the membrane as a beta stranded span at residues 220–228 (ELRLRYAYK). The Cytoplasmic segment spans residues 229 to 230 (DD). Residues 231–240 (ALSFIPSISL) form a beta stranded membrane-spanning segment. A topological domain (chloroplast intermembrane) is located at residue P241. A beta stranded transmembrane segment spans residues 242–250 (SNAASFAFK). Topologically, residues 251 to 257 (RRFSPSD) are cytoplasmic. The chain crosses the membrane as a beta stranded span at residues 258–267 (KLSYWYNFDS). Topologically, residues 268–269 (NM) are chloroplast intermembrane. The beta stranded transmembrane segment at 270-279 (WSAVYKRTYG) threads the bilayer. Topologically, residues 280-286 (KDYKLKA) are cytoplasmic. A beta stranded membrane pass occupies residues 287–296 (GYDSDVRLGW). Residues 297–316 (ASLWVGDEAGKVKTTPMKMK) are Chloroplast intermembrane-facing. The beta stranded transmembrane segment at 317 to 326 (VQFMLQVPQD) threads the bilayer. Residues 327–343 (DIKSSVLMFRVKKRWDI) are Cytoplasmic-facing.

The protein belongs to the plastid outer envelope porin OEP37 (TC 1.B.47) family. As to quaternary structure, forms an hourglass-shaped multimeric complex. As to expression, ubiquitously expressed at low levels. Mostly present in cotyledons, and accumulates in seedlings and embryos.

It localises to the plastid. Its subcellular location is the chloroplast outer membrane. Its function is as follows. Voltage-dependent peptide-sensitive high conductance rectifying cation channel with a strong affinity for TIC32 that is imported into the chloroplast. Conductance is pH-dependent decreasing with decreasing pH values. This is Outer envelope pore protein 37, chloroplastic (OEP37) from Arabidopsis thaliana (Mouse-ear cress).